The chain runs to 670 residues: Extracellular matrix protein 2 (670 aa).

A signal peptide spans 1–19 (MKLAVLFCFILLIVLQTDC). One can recognise a VWFC domain in the interval 96-153 (GYCFVKGMIMYNKAVWSPEPCTTCLCSNGRVLCDETECHPKACPYTIKPEGECCPICS). A disordered region spans residues 185 to 270 (SEEDEEIAEG…EEDAIRGDVF (86 aa)). The segment covering 192–227 (AEGHKEHKKETSVPTKIHGDGERTERKLRPEKEGRS) has biased composition (basic and acidic residues). A compositionally biased stretch (acidic residues) spans 241-263 (ESKEETEREGEEEEEEEEEEEED). The Cell attachment site motif lies at 266-268 (RGD). The region spanning 278–315 (PGTPRGRPRLPRSCSLSYRTISCVHADFTEIPPITAPE) is the LRRNT domain. LRR repeat units follow at residues 339–359 (NLERLDLSRNNITSSGIGPKA), 365–386 (KLMRLNMDGNNLVHIPSDLPST), 387–407 (LEELKINDNNLQAIDEKSLSD), 410–430 (QLVTLELEGNNLSEINVDPLA), 436–456 (SLSYLRLGRNKFRIIPQGLPA), 457–478 (STEELYLENNQIEEITEICFNH), 481–501 (KITMIILRYNKIEESRIAPLA), 507–528 (NLESIDLSYNKLYHVPSYLPKS), 529–549 (LLHLVLIGNQIDRIPGYVFGH), 553–573 (GLEYLYLSFNRLSDDGVDLVS), 580–601 (SLRELFLDHNDFKSIPPGIQDM), 603–624 (ALHFLRLNNNKIRNIHPEQICN), and 632–655 (ALEHLHLENNYIRTREISSYAFSC). N349 carries an N-linked (GlcNAc...) asparagine glycan. Residue N420 is glycosylated (N-linked (GlcNAc...) asparagine). Residue N477 is glycosylated (N-linked (GlcNAc...) asparagine).

The protein belongs to the small leucine-rich proteoglycan (SLRP) family. SLRP class I subfamily. Interacts with numerous extracellular matrix proteins. Interacts with isoform 1 of MSL1. Interacts with isoform 3 of RASSF1.

It is found in the secreted. It localises to the extracellular space. Its subcellular location is the extracellular matrix. In terms of biological role, promotes matrix assembly and cell adhesiveness. The sequence is that of Extracellular matrix protein 2 (Ecm2) from Mus musculus (Mouse).